The sequence spans 86 residues: Cell division protein ZapA (86 aa).

It belongs to the ZapA family. Type 2 subfamily. In terms of assembly, homodimer. Interacts with FtsZ.

The protein resides in the cytoplasm. Activator of cell division through the inhibition of FtsZ GTPase activity, therefore promoting FtsZ assembly into bundles of protofilaments necessary for the formation of the division Z ring. It is recruited early at mid-cell but it is not essential for cell division. This Oceanobacillus iheyensis (strain DSM 14371 / CIP 107618 / JCM 11309 / KCTC 3954 / HTE831) protein is Cell division protein ZapA.